The chain runs to 566 residues: MLRVNSKSSIKTFVRHLSHKELKFGVEGRAALLKGVNTLADAVSVTLGPKGRNVLIEQQFGAPKITKDGVTVAKAITLEDKFEDLGAKLLQEVASKTNESAGDGTTSATVLGRSIFTESVKNVAAGCNPMDLRRGSQAAVEAVIEFLQKNKKEITTSEEIAQVATISANGDKHIGDLLANAMEKVGKEGVITVKEGKTLEDELEVTEGMKFDRGFISPYFITNTKTGKVEFENPLILLSEKKISSIQDILPSLELSNQTRRPLLIIAEDVDGEALAACILNKLRGQVQVCAVKAPGFGDNRKNTLGDIAILSGGTVFTEELDIKPENATIEQLGSAGAVTITKEDTVLLNGEGSKDNLEARCEQIRSVIADVHTTEYEKEKLQERLAKLSGGVAVIKVGGASEVEVGEKKDRYEDALNATRAAVEEGILPGGGTALIKATKILDEVKEKAVNFDQKLGVDTIRAAITKPAKRIIENAGEEGAVIVGKIYDEPEFNKGYDSQKGEFTDMIAAGIIDPFKVVKNGLVDASGVASLLATTECAIVDAPQPKGSPAAPPAPGMGGMPGMF.

Positions 546-566 (QPKGSPAAPPAPGMGGMPGMF) are disordered.

The protein belongs to the chaperonin (HSP60) family.

It is found in the mitochondrion. Its function is as follows. May participate in assembly and/or disassembly of proteins imported into the mitochondrion. HSP60 are ATPases and have affinity for unfolded proteins. In Candida albicans (strain SC5314 / ATCC MYA-2876) (Yeast), this protein is Heat shock protein 60, mitochondrial (HSP60).